A 157-amino-acid chain; its full sequence is Glycine-rich RNA-binding, abscisic acid-inducible protein (157 aa).

One can recognise an RRM domain in the interval 8–86; the sequence is YRCFVGGLAW…RNITVNQAQS (79 aa). The disordered stretch occupies residues 82–157; that stretch reads NQAQSRGGGG…YGGGGGGWRD (76 aa). Residues 87–157 are compositionally biased toward gly residues; that stretch reads RGGGGGGGGY…YGGGGGGWRD (71 aa).

Possibly has a role in RNA transcription or processing during stress. In Zea mays (Maize), this protein is Glycine-rich RNA-binding, abscisic acid-inducible protein (RAB15).